Here is a 359-residue protein sequence, read N- to C-terminus: 3-dehydroquinate synthase (359 aa).

NAD(+) is bound by residues 71-76 (DGEAHK), 105-109 (GVIGD), 129-130 (TT), Lys142, Lys151, and 169-172 (TLHT). Zn(2+) is bound by residues Glu184, His247, and His264.

The protein belongs to the sugar phosphate cyclases superfamily. Dehydroquinate synthase family. NAD(+) serves as cofactor. Requires Co(2+) as cofactor. Zn(2+) is required as a cofactor.

The protein localises to the cytoplasm. It carries out the reaction 7-phospho-2-dehydro-3-deoxy-D-arabino-heptonate = 3-dehydroquinate + phosphate. It participates in metabolic intermediate biosynthesis; chorismate biosynthesis; chorismate from D-erythrose 4-phosphate and phosphoenolpyruvate: step 2/7. In terms of biological role, catalyzes the conversion of 3-deoxy-D-arabino-heptulosonate 7-phosphate (DAHP) to dehydroquinate (DHQ). In Neisseria meningitidis serogroup B (strain ATCC BAA-335 / MC58), this protein is 3-dehydroquinate synthase.